Consider the following 248-residue polypeptide: 3-deoxy-manno-octulosonate cytidylyltransferase (248 aa).

It belongs to the KdsB family.

It is found in the cytoplasm. The enzyme catalyses 3-deoxy-alpha-D-manno-oct-2-ulosonate + CTP = CMP-3-deoxy-beta-D-manno-octulosonate + diphosphate. The protein operates within nucleotide-sugar biosynthesis; CMP-3-deoxy-D-manno-octulosonate biosynthesis; CMP-3-deoxy-D-manno-octulosonate from 3-deoxy-D-manno-octulosonate and CTP: step 1/1. Its pathway is bacterial outer membrane biogenesis; lipopolysaccharide biosynthesis. Its function is as follows. Activates KDO (a required 8-carbon sugar) for incorporation into bacterial lipopolysaccharide in Gram-negative bacteria. The sequence is that of 3-deoxy-manno-octulosonate cytidylyltransferase from Photobacterium profundum (strain SS9).